The following is a 276-amino-acid chain: Phospholipid phosphatase 2 (276 aa).

Topologically, residues 1 to 4 are cytoplasmic; that stretch reads MERR. The helical transmembrane segment at 5–25 threads the bilayer; sequence WVFVLLDVLCVLVASLPFIIL. Topologically, residues 26–51 are lumenal; that stretch reads TLVNAPYKRGFYCGDDSIRYPYRPDT. A helical membrane pass occupies residues 52-72; that stretch reads ITHGLMAGVIITATVILVSLG. Topologically, residues 73-87 are cytoplasmic; it reads EAYLVYTDRLYSRSN. The chain crosses the membrane as a helical span at residues 88-108; sequence FNNYVAAIYKVLGTFLFGAAV. Residues 109-161 lie on the Lumenal side of the membrane; the sequence is SQSLTDLAKYMIGRLRPSFLAVCDPDWSQVNCSGYVQLEVCRGSPANVTEARL. A phosphatase sequence motif I region spans residues 117 to 125; it reads KYMIGRLRP. N-linked (GlcNAc...) asparagine glycans are attached at residues Asn-139 and Asn-155. A helical membrane pass occupies residues 162-182; it reads SFYSGHSSFGMYCMLFLALYV. Residues 164–167 form a phosphatase sequence motif II region; that stretch reads YSGH. The Proton donors role is filled by His-167. At 183–189 the chain is on the cytoplasmic side; the sequence is QARLCWK. A helical membrane pass occupies residues 190–210; it reads WARLLRPTVQFFLVAFAIYVG. Topologically, residues 211-218 are lumenal; that stretch reads YTRVSDHK. The segment at 212–223 is phosphatase sequence motif III; sequence TRVSDHKHHWSD. The Nucleophile role is filled by His-219. The helical transmembrane segment at 219-239 threads the bilayer; sequence HHWSDVLVGLLQGALVACLTV. Topologically, residues 240–276 are cytoplasmic; the sequence is RYVSDFFKSRPPQPCQEDEVPERKPSLSLTLTLGDRP. Residues 251–276 are disordered; it reads PQPCQEDEVPERKPSLSLTLTLGDRP.

This sequence belongs to the PA-phosphatase related phosphoesterase family. Forms functional homodimers and homooligomers. Can also form heterooligomers with PLPP1 and PLPP3. N-glycosylated. As to expression, expressed at high levels in lung, liver and kidney; at low levels in heart and brain, and was not detected in skeletal muscle.

Its subcellular location is the membrane. The protein localises to the cell membrane. It localises to the early endosome membrane. The protein resides in the endoplasmic reticulum membrane. The catalysed reaction is a 1,2-diacyl-sn-glycero-3-phosphate + H2O = a 1,2-diacyl-sn-glycerol + phosphate. It catalyses the reaction 1,2-dihexadecanoyl-sn-glycero-3-phosphate + H2O = 1,2-dihexadecanoyl-sn-glycerol + phosphate. The enzyme catalyses 1,2-di-(9Z-octadecenoyl)-sn-glycero-3-phosphate + H2O = 1,2-di-(9Z-octadecenoyl)-sn-glycerol + phosphate. It carries out the reaction a monoacyl-sn-glycero-3-phosphate + H2O = a monoacylglycerol + phosphate. The catalysed reaction is (9Z)-octadecenoyl-sn-glycero-3-phosphate + H2O = (9Z-octadecenoyl)-glycerol + phosphate. It catalyses the reaction sphing-4-enine 1-phosphate + H2O = sphing-4-enine + phosphate. The enzyme catalyses an N-acylsphing-4-enine 1-phosphate + H2O = an N-acylsphing-4-enine + phosphate. It carries out the reaction N-(octanoyl)-sphing-4-enine-1-phosphate + H2O = N-octanoylsphing-4-enine + phosphate. The catalysed reaction is N-(9Z-octadecenoyl)-ethanolamine phosphate + H2O = N-(9Z-octadecenoyl) ethanolamine + phosphate. It participates in lipid metabolism; phospholipid metabolism. With respect to regulation, magnesium-independent phospholipid phosphatase. Insensitive to N-ethylmaleimide. Its function is as follows. Magnesium-independent phospholipid phosphatase that catalyzes the dephosphorylation of a variety of glycerolipid and sphingolipid phosphate esters including phosphatidate/PA, lysophosphatidate/LPA, sphingosine 1-phosphate/S1P and ceramide 1-phosphate/C1P. Has no apparent extracellular phosphatase activity and therefore most probably acts intracellularly. Also acts on N-oleoyl ethanolamine phosphate/N-(9Z-octadecenoyl)-ethanolamine phosphate, a potential physiological compound. Through dephosphorylation of these bioactive lipid mediators produces new bioactive compounds and may regulate signal transduction in different cellular processes. Indirectly regulates, for instance, cell cycle G1/S phase transition through its phospholipid phosphatase activity. This Mus musculus (Mouse) protein is Phospholipid phosphatase 2.